A 255-amino-acid polypeptide reads, in one-letter code: MVLIRVLANLLILHLSYAQKSSELVIGGDECNINEHRFLALVYANGSLCGGTLINQEWVLTARHCDRGNMRIYLGMHNLKVLNKDALRRFPKEKYFCLNIRNDTIWDKDIMLIRLNRPVRNSAHIAPLSLPSNPPSVGSVCRVMGWGTITSPNATLPDVPHCANINILDYAVCQAAYRGLAATTLCSGILEGGKDTCKGDSGGPLICNGQFQGILSVGGNPCAQPRKPGVYTKVFDYTDWIQSIISGNTDAACPP.

Positions 1–18 (MVLIRVLANLLILHLSYA) are cleaved as a signal peptide. A propeptide spanning residues 19-24 (QKSSEL) is cleaved from the precursor. Residues 25 to 246 (VIGGDECNIN…YTDWIQSIIS (222 aa)) enclose the Peptidase S1 domain. Intrachain disulfides connect Cys-31-Cys-162, Cys-49-Cys-65, Cys-97-Cys-253, Cys-141-Cys-207, Cys-173-Cys-186, and Cys-197-Cys-222. N-linked (GlcNAc...) asparagine glycosylation occurs at Asn-45. The active-site Charge relay system is the His-64. Residue Asn-102 is glycosylated (N-linked (GlcNAc...) asparagine). Asp-109 serves as the catalytic Charge relay system. Asn-153 carries N-linked (GlcNAc...) asparagine glycosylation. The Charge relay system role is filled by Ser-201.

The protein belongs to the peptidase S1 family. Snake venom subfamily. In terms of assembly, monomer. Expressed by the venom gland.

The protein resides in the secreted. In terms of biological role, snake venom serine protease that selectively cleaves the heavy chain of protein C (PROC). This activation is thrombomodulin-independent. The sequence is that of Protein C activator from Agkistrodon piscivorus leucostoma (Western cottonmouth).